Here is a 278-residue protein sequence, read N- to C-terminus: Envelope glycoprotein L (278 aa).

Residues 1–30 (MCRRPDCGFSFSPGPVILLWCCLLLPIVSS) form the signal peptide. The gL betaherpesvirus-type domain occupies 43–256 (VPAECPELTR…DKYYAGLPPE (214 aa)). Cysteine 154 and cysteine 159 form a disulfide bridge.

The protein belongs to the herpesviridae glycoprotein L (gL) family. Betaherpesvirinae gL subfamily. As to quaternary structure, interacts with glycoprotein H (gH); this interaction is necessary for the correct processing and cell surface expression of gH. Forms the envelope pentamer complex (PC) composed of gH, gL, UL128, UL130, and UL131A. The pentamer interacts with host NRP2. Forms the envelope trimer complex composed of gH, gL, and gO. The trimer interacts with host PDGFRA. The trimer also interacts with host EPHA2.

It is found in the virion membrane. It localises to the host cell membrane. The protein localises to the host Golgi apparatus. The protein resides in the host trans-Golgi network. The heterodimer glycoprotein H-glycoprotein L is required for the fusion of viral and plasma membranes leading to virus entry into the host cell. Acts as a functional inhibitor of gH and maintains gH in an inhibited form. Upon binding to host integrins, gL dissociates from gH leading to activation of the viral fusion glycoproteins gB and gH. In human cytomegalovirus, forms two distincts complexes to mediate viral entry, a trimer and a pentamer at the surface of the virion envelope. The gH-gL-gO trimer is required for infection in fibroblasts by interacting with host PDGFRA, and in glioblastoma cells by interacting with host EPHA2. The gH-gL-UL128-UL130-UL131A pentamer is essential for viral entry in epithelial, endothelial and myeloid cells via interaction with host NRP2. The sequence is that of Envelope glycoprotein L from Homo sapiens (Human).